Consider the following 344-residue polypeptide: tRNA N6-adenosine threonylcarbamoyltransferase (344 aa).

Fe cation is bound by residues histidine 114 and histidine 118. Substrate is bound by residues 136–140 (LVSGG), aspartate 170, glycine 183, aspartate 187, and asparagine 278. Position 306 (aspartate 306) interacts with Fe cation. The interval 325–344 (PSPLDVPSDPGLPVMQGQVR) is disordered.

This sequence belongs to the KAE1 / TsaD family. The cofactor is Fe(2+).

The protein resides in the cytoplasm. It carries out the reaction L-threonylcarbamoyladenylate + adenosine(37) in tRNA = N(6)-L-threonylcarbamoyladenosine(37) in tRNA + AMP + H(+). Functionally, required for the formation of a threonylcarbamoyl group on adenosine at position 37 (t(6)A37) in tRNAs that read codons beginning with adenine. Is involved in the transfer of the threonylcarbamoyl moiety of threonylcarbamoyl-AMP (TC-AMP) to the N6 group of A37, together with TsaE and TsaB. TsaD likely plays a direct catalytic role in this reaction. The protein is tRNA N6-adenosine threonylcarbamoyltransferase of Mycobacterium tuberculosis (strain ATCC 25177 / H37Ra).